A 151-amino-acid polypeptide reads, in one-letter code: Small ribosomal subunit protein bS6 (151 aa).

The disordered stretch occupies residues Glu97 to Asn151. A compositionally biased stretch (basic and acidic residues) spans Gln105–Asn151.

It belongs to the bacterial ribosomal protein bS6 family.

Functionally, binds together with bS18 to 16S ribosomal RNA. This is Small ribosomal subunit protein bS6 from Methylorubrum populi (strain ATCC BAA-705 / NCIMB 13946 / BJ001) (Methylobacterium populi).